The sequence spans 210 residues: LexA repressor (210 aa).

Residues Arg-30–Lys-50 constitute a DNA-binding region (H-T-H motif). Catalysis depends on for autocatalytic cleavage activity residues Ser-127 and Lys-164.

Belongs to the peptidase S24 family. Homodimer.

The enzyme catalyses Hydrolysis of Ala-|-Gly bond in repressor LexA.. In terms of biological role, represses a number of genes involved in the response to DNA damage (SOS response), including recA and lexA. In the presence of single-stranded DNA, RecA interacts with LexA causing an autocatalytic cleavage which disrupts the DNA-binding part of LexA, leading to derepression of the SOS regulon and eventually DNA repair. In Actinobacillus pleuropneumoniae serotype 5b (strain L20), this protein is LexA repressor.